The chain runs to 20 residues: Protein PR-L2 (20 aa).

A disordered region spans residues 1–20 (SVFAFENEQSSTIAPARLYK).

Belongs to the BetVI family.

The sequence is that of Protein PR-L2 from Lupinus luteus (European yellow lupine).